The primary structure comprises 337 residues: Glycerol-3-phosphate dehydrogenase [NAD(P)+] 2 (337 aa).

NADPH contacts are provided by threonine 11, tryptophan 12, and lysine 105. Sn-glycerol 3-phosphate contacts are provided by lysine 105, glycine 139, and threonine 141. Alanine 143 contributes to the NADPH binding site. Residues lysine 194, aspartate 247, serine 257, arginine 258, and asparagine 259 each coordinate sn-glycerol 3-phosphate. Catalysis depends on lysine 194, which acts as the Proton acceptor. Arginine 258 is an NADPH binding site. Residues valine 282 and glutamate 284 each contribute to the NADPH site.

Belongs to the NAD-dependent glycerol-3-phosphate dehydrogenase family.

The protein localises to the cytoplasm. It catalyses the reaction sn-glycerol 3-phosphate + NAD(+) = dihydroxyacetone phosphate + NADH + H(+). The enzyme catalyses sn-glycerol 3-phosphate + NADP(+) = dihydroxyacetone phosphate + NADPH + H(+). The protein operates within membrane lipid metabolism; glycerophospholipid metabolism. Functionally, catalyzes the reduction of the glycolytic intermediate dihydroxyacetone phosphate (DHAP) to sn-glycerol 3-phosphate (G3P), the key precursor for phospholipid synthesis. This Lactobacillus delbrueckii subsp. bulgaricus (strain ATCC 11842 / DSM 20081 / BCRC 10696 / JCM 1002 / NBRC 13953 / NCIMB 11778 / NCTC 12712 / WDCM 00102 / Lb 14) protein is Glycerol-3-phosphate dehydrogenase [NAD(P)+] 2.